The chain runs to 341 residues: S-adenosylmethionine:tRNA ribosyltransferase-isomerase (341 aa).

It belongs to the QueA family. Monomer.

The protein resides in the cytoplasm. It carries out the reaction 7-aminomethyl-7-carbaguanosine(34) in tRNA + S-adenosyl-L-methionine = epoxyqueuosine(34) in tRNA + adenine + L-methionine + 2 H(+). Its pathway is tRNA modification; tRNA-queuosine biosynthesis. Transfers and isomerizes the ribose moiety from AdoMet to the 7-aminomethyl group of 7-deazaguanine (preQ1-tRNA) to give epoxyqueuosine (oQ-tRNA). The protein is S-adenosylmethionine:tRNA ribosyltransferase-isomerase of Desulforamulus reducens (strain ATCC BAA-1160 / DSM 100696 / MI-1) (Desulfotomaculum reducens).